The chain runs to 346 residues: Putative [LysW]-L-2-aminoadipate/[LysW]-L-glutamate phosphate reductase (346 aa).

An NADP(+)-binding site is contributed by 12–15; the sequence is SGFT. Residue cysteine 147 is part of the active site. Asparagine 310 contacts NADP(+).

It belongs to the NAGSA dehydrogenase family. Type 1 subfamily. LysY sub-subfamily.

It is found in the cytoplasm. It catalyses the reaction [amino-group carrier protein]-C-terminal-N-(1-carboxy-5-oxopentan-1-yl)-L-glutamine + phosphate + NADP(+) = [amino-group carrier protein]-C-terminal-N-(1-carboxy-5-phosphooxy-5-oxopentan-1-yl)-L-glutamine + NADPH + H(+). The catalysed reaction is [amino-group carrier protein]-C-terminal-gamma-(L-glutamyl-5-semialdehyde)-L-glutamate + phosphate + NADP(+) = [amino-group carrier protein]-C-terminal-gamma-(5-phospho-L-glutamyl)-L-glutamate + NADPH + H(+). The protein operates within amino-acid biosynthesis; L-lysine biosynthesis via AAA pathway; L-lysine from L-alpha-aminoadipate (Thermus route): step 3/5. It functions in the pathway amino-acid biosynthesis; L-arginine biosynthesis. Involved in both the arginine and lysine biosynthetic pathways. In Natronomonas pharaonis (strain ATCC 35678 / DSM 2160 / CIP 103997 / JCM 8858 / NBRC 14720 / NCIMB 2260 / Gabara) (Halobacterium pharaonis), this protein is Putative [LysW]-L-2-aminoadipate/[LysW]-L-glutamate phosphate reductase.